We begin with the raw amino-acid sequence, 137 residues long: Large ribosomal subunit protein uL16 (137 aa).

The protein belongs to the universal ribosomal protein uL16 family. Part of the 50S ribosomal subunit.

Binds 23S rRNA and is also seen to make contacts with the A and possibly P site tRNAs. In Aromatoleum aromaticum (strain DSM 19018 / LMG 30748 / EbN1) (Azoarcus sp. (strain EbN1)), this protein is Large ribosomal subunit protein uL16.